The sequence spans 492 residues: PHO85 cyclin-8 (492 aa).

Disordered regions lie at residues 1–32 (MAND…DNDS), 143–163 (SGSG…GTGR), and 223–252 (KVNS…ENES). A compositionally biased stretch (polar residues) spans 8–20 (NKSLINDALTRSM). A compositionally biased stretch (acidic residues) spans 23-32 (FYDDDDDNDS). Ser-32 carries the post-translational modification Phosphoserine.

Belongs to the cyclin family. PHO80 subfamily. Forms a cyclin-CDK complex with PHO85.

The protein resides in the cytoplasm. The protein localises to the nucleus. Its function is as follows. Cyclin partner of the cyclin-dependent kinase (CDK) PHO85. Together with cyclin PCL10, negatively controls glycogen accumulation under favorable growth conditions. Involved in phosphorylation and negative regulation of glycogen synthase GSY2. Also has minor GLC8 kinase activity. In Saccharomyces cerevisiae (strain ATCC 204508 / S288c) (Baker's yeast), this protein is PHO85 cyclin-8 (PCL8).